A 200-amino-acid chain; its full sequence is Octanoyltransferase (200 aa).

Positions 27 to 200 (GAEDDQLWLV…WAELFSARWR (174 aa)) constitute a BPL/LPL catalytic domain. Substrate contacts are provided by residues 66–73 (RGGQITYH), 134–136 (SLG), and 147–149 (GIA). The active-site Acyl-thioester intermediate is the C165.

The protein belongs to the LipB family.

Its subcellular location is the cytoplasm. The enzyme catalyses octanoyl-[ACP] + L-lysyl-[protein] = N(6)-octanoyl-L-lysyl-[protein] + holo-[ACP] + H(+). The protein operates within protein modification; protein lipoylation via endogenous pathway; protein N(6)-(lipoyl)lysine from octanoyl-[acyl-carrier-protein]: step 1/2. Catalyzes the transfer of endogenously produced octanoic acid from octanoyl-acyl-carrier-protein onto the lipoyl domains of lipoate-dependent enzymes. Lipoyl-ACP can also act as a substrate although octanoyl-ACP is likely to be the physiological substrate. This Dichelobacter nodosus (strain VCS1703A) protein is Octanoyltransferase.